A 1414-amino-acid chain; its full sequence is MRDLVKQLKSEKHTAEFDALRIKLASPEEVRSWSYGEVKKPETINYRTFKPEREGLFCAKIFGPIKDYECLCGKYKRLKHRGVICEKCGVEVTLAKVRRERMGHIELASPVAHIWYLKSLPSRIGLLLDVTLRDIERILYFEAYVVVDPGMTDLEPRQLLSEEAYLDALEEYGDDFTALMGAEAIQRLLRDIDVEAEVEALRTELQTTTSETKTKKLTKRLKVLSAFLESGNKPEWMILTVLPVLPPDLRPLVPLDGGRFATSDLNDLYRRVINRNNRLKRLLDLNAPDIIVRNEKRMLQEAVDALLDNGRRGRAILGSNRRQLKSLADMIKGKSGRFRQNLLGKRVDYSGRSVIVVGPTLKLHQAGLPKKMALELFKPFIFSKLQLRGLATTVKAAKKLVENEGPEVWDILEEVIREHPILLNRAPTLHRLGIQAFEPVLVEGKAIQLHPLVCTAYNADFDGDQMAVHVPLTLEAQLEARSLMMSTNNVLHPANGEPIIVPSQDVVLGLYYITRDRVNAKGEGMRFADAQEVVRAYENDQVDLHARITVRIKEGILNEAGEIEESDRLVNTAAGRILLWQIVPKGLPFALVDQPMTKKAVTKLLDFCYRNLGLKTTVIFADKLMYMGFHYATHSGVSIGINDLVVPDQKEAIISRAEDEVREIEKQYASGLVTHGERRNKVIDIWSRTNDQVAKAMMEKIAVEKVKDAEGKEVAQSSFNSIYMMSDSGARGSAAQTRQLAGMRGLMARPDGTIIETPITANFREGLNVLQYFISTHGARKGLADTALKTANSGYLTRRLVDVAQDLVVTEHDCGTEASIEMMPHIEGGDVVEPLRERVLGRILAEPVMDPKSRKELLAKDTFLDERRVDILEEHSIDRVRVRSAITCEARYGICSMCYGRDLARGHVVNVGEAIGVVAAQSIGEPGTQLTMRTFHIGGAASRATAANNIGVKSTGKIKLRNLKTVEQAQGNLVAVSRSGELVVQDLQGSEREHYKVPYGATISVRDGDSVKAGQIVAQWDPHTHPIITEVAGTLRFVDLVDGVTMNRQTDELTGLSSIVITSTKQRSASGKELRPMVKLVDKNDDDLFLPGGKVPAHYFLPEGTFLTKEDGTTVNIGDVLARIPQETSKTRDITGGLPRVADLFEARRPKDAAILAEISGVVSFGKDTKDKGRLIITAPDGTTHEELIPKWRHVSVFEGETVEKGEVIADGPRDPHDILRLLGVNALANYIVNEVQEVYRLQGVKINDKHIEVIVRQMLRKVKITQPGDTDLLQNEQVERTRVREENEKIIKKDGTVAKVEPILLGITKASLATESFISAASFQETTRVLTAASVAGKRDDLRGLKENVIVGRLIPAGTGFSYHQQRRAVAGKSVEEKEIEEKRVTASEAEQALSEALKSSAPQEAKAAQKDE.

Zn(2+) is bound by residues C70, C72, C85, and C88. Mg(2+) contacts are provided by D460, D462, and D464. Zn(2+) is bound by residues C814, C888, C895, and C898. Residues 1392 to 1403 (EQALSEALKSSA) show a composition bias toward low complexity. The tract at residues 1392-1414 (EQALSEALKSSAPQEAKAAQKDE) is disordered.

The protein belongs to the RNA polymerase beta' chain family. As to quaternary structure, the RNAP catalytic core consists of 2 alpha, 1 beta, 1 beta' and 1 omega subunit. When a sigma factor is associated with the core the holoenzyme is formed, which can initiate transcription. The cofactor is Mg(2+). Zn(2+) serves as cofactor.

The catalysed reaction is RNA(n) + a ribonucleoside 5'-triphosphate = RNA(n+1) + diphosphate. Its function is as follows. DNA-dependent RNA polymerase catalyzes the transcription of DNA into RNA using the four ribonucleoside triphosphates as substrates. The polypeptide is DNA-directed RNA polymerase subunit beta' (Coxiella burnetii (strain RSA 331 / Henzerling II)).